A 186-amino-acid polypeptide reads, in one-letter code: uncharacterized protein (186 aa).

It to M.jannaschii MJ0208.

This is an uncharacterized protein from Methanocaldococcus jannaschii (strain ATCC 43067 / DSM 2661 / JAL-1 / JCM 10045 / NBRC 100440) (Methanococcus jannaschii).